Reading from the N-terminus, the 348-residue chain is Putative transport protein HP_0567 (348 aa).

The next 8 helical transmembrane spans lie at 6-26 (FFWI…QDFL), 27-47 (MDAL…VFLD), 56-76 (SFLC…FIVY), 143-163 (LKLI…FYYG), 194-214 (IVLL…GVMI), 224-244 (LGIL…LIWI), 266-286 (SILL…IVFI), and 300-320 (MLIF…GIIV).

This sequence belongs to the autoinducer-2 exporter (AI-2E) (TC 2.A.86) family.

The protein localises to the cell membrane. The sequence is that of Putative transport protein HP_0567 from Helicobacter pylori (strain ATCC 700392 / 26695) (Campylobacter pylori).